Here is a 959-residue protein sequence, read N- to C-terminus: Alanine--tRNA ligase (959 aa).

S389 bears the Phosphoserine mark. 4 residues coordinate Zn(2+): H606, H610, C725, and H729.

This sequence belongs to the class-II aminoacyl-tRNA synthetase family. As to quaternary structure, monomer. It depends on Zn(2+) as a cofactor.

Its subcellular location is the mitochondrion. The protein localises to the cytoplasm. The enzyme catalyses tRNA(Ala) + L-alanine + ATP = L-alanyl-tRNA(Ala) + AMP + diphosphate. Catalyzes the attachment of alanine to tRNA(Ala) in a two-step reaction: alanine is first activated by ATP to form Ala-AMP and then transferred to the acceptor end of tRNA(Ala). Also edits incorrectly charged tRNA(Ala) via its editing domain. This is Alanine--tRNA ligase (ala1) from Schizosaccharomyces pombe (strain 972 / ATCC 24843) (Fission yeast).